The sequence spans 312 residues: Large ribosomal subunit protein uL10 (312 aa).

A Glycyl lysine isopeptide (Lys-Gly) (interchain with G-Cter in ubiquitin) cross-link involves residue Lys14. Ser68 is modified (phosphoserine). Glycyl lysine isopeptide (Lys-Gly) (interchain with G-Cter in ubiquitin) cross-links involve residues Lys97 and Lys144. The interval 199-230 (SSILDITDEELVSHFVSAVSTIASISLAIGYP) is interaction with P1A-P2B. The segment at 231 to 258 (TLPSVGHTLINNYKDLLAVAIAASYHYP) is interaction with P1B-P2A. Residues 278–293 (PAATSAASGDAAPAEE) are compositionally biased toward low complexity. The disordered stretch occupies residues 278–312 (PAATSAASGDAAPAEEAAAEEEEESDDDMGFGLFD). Residues 294–306 (AAAEEEEESDDDM) show a composition bias toward acidic residues. Ser302 bears the Phosphoserine; by CK2 mark.

It belongs to the universal ribosomal protein uL10 family. As to quaternary structure, component of the large ribosomal subunit (LSU). Mature yeast ribosomes consist of a small (40S) and a large (60S) subunit. The 40S small subunit contains 1 molecule of ribosomal RNA (18S rRNA) and 33 different proteins (encoded by 57 genes). The large 60S subunit contains 3 rRNA molecules (25S, 5.8S and 5S rRNA) and 46 different proteins (encoded by 81 genes). The 5 acidic ribosomal P-proteins form the stalk structure of the 60S subunit. They are organized as a pentameric complex in which uL10/P0 interacts with 2 heterodimers, P1A-P2B and P1B-P2A. uL10 directly interacts with 28S rRNA. uL10 interacts with YFL034W.

It is found in the cytoplasm. Component of the ribosome, a large ribonucleoprotein complex responsible for the synthesis of proteins in the cell. The small ribosomal subunit (SSU) binds messenger RNAs (mRNAs) and translates the encoded message by selecting cognate aminoacyl-transfer RNA (tRNA) molecules. The large subunit (LSU) contains the ribosomal catalytic site termed the peptidyl transferase center (PTC), which catalyzes the formation of peptide bonds, thereby polymerizing the amino acids delivered by tRNAs into a polypeptide chain. The nascent polypeptides leave the ribosome through a tunnel in the LSU and interact with protein factors that function in enzymatic processing, targeting, and the membrane insertion of nascent chains at the exit of the ribosomal tunnel. uL10 forms part of the P stalk that participates in recruiting G proteins to the ribosome. This Saccharomyces cerevisiae (strain ATCC 204508 / S288c) (Baker's yeast) protein is Large ribosomal subunit protein uL10.